A 1189-amino-acid chain; its full sequence is Pesticidal crystal protein Cry1Ca (1189 aa).

Belongs to the delta endotoxin family.

Its function is as follows. Promotes colloidosmotic lysis by binding to the midgut epithelial cells of many lepidopteran larvae including Spodoptera species. The sequence is that of Pesticidal crystal protein Cry1Ca (cry1Ca) from Bacillus thuringiensis subsp. aizawai.